A 173-amino-acid chain; its full sequence is NADH-quinone oxidoreductase subunit B 2 (173 aa).

The [4Fe-4S] cluster site is built by C42, C43, C107, and C137.

It belongs to the complex I 20 kDa subunit family. In terms of assembly, NDH-1 is composed of 14 different subunits. Subunits NuoB, C, D, E, F, and G constitute the peripheral sector of the complex. Requires [4Fe-4S] cluster as cofactor.

The protein resides in the cell inner membrane. It catalyses the reaction a quinone + NADH + 5 H(+)(in) = a quinol + NAD(+) + 4 H(+)(out). Functionally, NDH-1 shuttles electrons from NADH, via FMN and iron-sulfur (Fe-S) centers, to quinones in the respiratory chain. Couples the redox reaction to proton translocation (for every two electrons transferred, four hydrogen ions are translocated across the cytoplasmic membrane), and thus conserves the redox energy in a proton gradient. This chain is NADH-quinone oxidoreductase subunit B 2, found in Anaeromyxobacter dehalogenans (strain 2CP-C).